The chain runs to 398 residues: Tyrosine--tRNA ligase (398 aa).

The short motif at 42–51 (PTAPDIHLGH) is the 'HIGH' region element. Positions 226–230 (KMSKS) match the 'KMSKS' region motif. Lysine 229 is an ATP binding site. The S4 RNA-binding domain occupies 336–397 (LAIANLLKDA…GKRKFAKVTL (62 aa)).

The protein belongs to the class-I aminoacyl-tRNA synthetase family. TyrS type 2 subfamily. As to quaternary structure, homodimer.

The protein localises to the cytoplasm. It catalyses the reaction tRNA(Tyr) + L-tyrosine + ATP = L-tyrosyl-tRNA(Tyr) + AMP + diphosphate + H(+). Its function is as follows. Catalyzes the attachment of tyrosine to tRNA(Tyr) in a two-step reaction: tyrosine is first activated by ATP to form Tyr-AMP and then transferred to the acceptor end of tRNA(Tyr). This chain is Tyrosine--tRNA ligase, found in Shewanella oneidensis (strain ATCC 700550 / JCM 31522 / CIP 106686 / LMG 19005 / NCIMB 14063 / MR-1).